A 231-amino-acid polypeptide reads, in one-letter code: Small ribosomal subunit protein uS3c (231 aa).

Residues 39-123 (LRNFIKKKYI…HLRLSVKPLR (85 aa)) enclose the KH type-2 domain.

Belongs to the universal ribosomal protein uS3 family. As to quaternary structure, part of the 30S ribosomal subunit.

It localises to the plastid. The protein resides in the chloroplast. This Chlorella vulgaris (Green alga) protein is Small ribosomal subunit protein uS3c (rps3).